Reading from the N-terminus, the 52-residue chain is Small, acid-soluble spore protein K (52 aa).

Residues 1–52 (MGKQAEFWSESKNNSKIDGQPKAKSRFASKRPNGTINTHPQERMRAANQQEE) are disordered.

It belongs to the SspK family.

The protein localises to the spore core. This is Small, acid-soluble spore protein K from Bacillus anthracis (strain A0248).